Consider the following 215-residue polypeptide: Putative B3 domain-containing protein Os11g0625400 (215 aa).

A DNA-binding region (TF-B3 1) is located at residues 1–51; sequence MTVELEKIAGSFFISKGWKTFVHRTGLLSGQYIRFQVLTPSKINVLLFDKK. Residues 92-117 are disordered; sequence SHTSNKETSSDSRTESMTDIPSSSDN. Positions 95 to 107 are enriched in basic and acidic residues; it reads SNKETSSDSRTES. The span at 108–117 shows a compositional bias: polar residues; sequence MTDIPSSSDN. A DNA-binding region (TF-B3 2) is located at residues 123–215; sequence DIKNYISIIG…PNVKITIDVL (93 aa).

The protein resides in the nucleus. The protein is Putative B3 domain-containing protein Os11g0625400 of Oryza sativa subsp. japonica (Rice).